The following is a 333-amino-acid chain: Leucine carboxyl methyltransferase 1 (333 aa).

S-adenosyl-L-methionine is bound by residues K42, R82, G107, D131, 181 to 182, and E208; that span reads DL.

Belongs to the methyltransferase superfamily. LCMT family.

The enzyme catalyses [phosphatase 2A protein]-C-terminal L-leucine + S-adenosyl-L-methionine = [phosphatase 2A protein]-C-terminal L-leucine methyl ester + S-adenosyl-L-homocysteine. Functionally, methylates the carboxyl group of the C-terminal leucine residue of protein phosphatase 2A catalytic subunits to form alpha-leucine ester residues. The chain is Leucine carboxyl methyltransferase 1 from Caenorhabditis elegans.